Reading from the N-terminus, the 201-residue chain is MSKRIAGPEIERLIQLLARVPGLGPRSARRAALHLIKKKEALLVPLGGAMQEAAEKVRICSCCGNVDTSDPCTICTDERRDPATLIVVEDVSDLWALERADTMNVRYHVLGGRLSPLDGIGPDDLNIKGLVERVASGAIKEVILAVNATVEGQTTAHYITDQLSNFDVRVTRLAHGVPVGGELDYLDEGTLAAALRARTTL.

A C4-type zinc finger spans residues 60-75 (CSCCGNVDTSDPCTIC). Positions 83 to 178 (ATLIVVEDVS…RVTRLAHGVP (96 aa)) constitute a Toprim domain.

The protein belongs to the RecR family.

Its function is as follows. May play a role in DNA repair. It seems to be involved in an RecBC-independent recombinational process of DNA repair. It may act with RecF and RecO. The chain is Recombination protein RecR from Brucella melitensis biotype 1 (strain ATCC 23456 / CCUG 17765 / NCTC 10094 / 16M).